Here is a 307-residue protein sequence, read N- to C-terminus: MLRVVEGIFIFVVVSESVFGVLGNGFIGLVNCIDCAKNKLSTIGFILTGLAISRIFLIWIIITDGFIQIFSPNIYASGNLIEYISYFWVIGNQSSMWFATSLSIFYFLKIANFSNYIFLWLKSRTNMVLPFMIVFLLISSLLNFAYIAKILNDYKTKNDTVWDLNMYKSEYFIKQILLNLGVIFFFTLSLITCIFLIISLWRHNRQMQSNVTGLRDSNTEAHVKAMKVLISFIILFILYFIGMAIEISCFTVRENKLLLMFGMTTTAIYPWGHSFILILGNSKLKQASLRVLQQLKCCEKRKNLRVT.

At 1-6 (MLRVVE) the chain is on the extracellular side. Residues 7–27 (GIFIFVVVSESVFGVLGNGFI) form a helical membrane-spanning segment. Over 28–42 (GLVNCIDCAKNKLST) the chain is Cytoplasmic. A helical membrane pass occupies residues 43–63 (IGFILTGLAISRIFLIWIIIT). Residues 64–100 (DGFIQIFSPNIYASGNLIEYISYFWVIGNQSSMWFAT) are Extracellular-facing. N-linked (GlcNAc...) asparagine glycosylation occurs at N92. The helical transmembrane segment at 101-121 (SLSIFYFLKIANFSNYIFLWL) threads the bilayer. Residues 122–126 (KSRTN) lie on the Cytoplasmic side of the membrane. Residues 127-147 (MVLPFMIVFLLISSLLNFAYI) form a helical membrane-spanning segment. Residues 148 to 179 (AKILNDYKTKNDTVWDLNMYKSEYFIKQILLN) lie on the Extracellular side of the membrane. N158 is a glycosylation site (N-linked (GlcNAc...) asparagine). The helical transmembrane segment at 180–200 (LGVIFFFTLSLITCIFLIISL) threads the bilayer. Residues 201-227 (WRHNRQMQSNVTGLRDSNTEAHVKAMK) lie on the Cytoplasmic side of the membrane. A helical membrane pass occupies residues 228–248 (VLISFIILFILYFIGMAIEIS). At 249–257 (CFTVRENKL) the chain is on the extracellular side. The chain crosses the membrane as a helical span at residues 258-278 (LLMFGMTTTAIYPWGHSFILI). At 279–307 (LGNSKLKQASLRVLQQLKCCEKRKNLRVT) the chain is on the cytoplasmic side.

Belongs to the G-protein coupled receptor T2R family. Expressed in subsets of taste receptor cells of the tongue and palate epithelium and exclusively in gustducin-positive cells.

Its subcellular location is the membrane. Its function is as follows. Gustducin-coupled strychnine receptor implicated in the perception of bitter compounds in the oral cavity and the gastrointestinal tract. Signals through PLCB2 and the calcium-regulated cation channel TRPM5. This Homo sapiens (Human) protein is Taste receptor type 2 member 10 (TAS2R10).